The following is a 331-amino-acid chain: Terpene synthase 8 (331 aa).

Residues 97–102 carry the DDxx(x)D/E motif motif; it reads DDFYLE. The short motif at 228-236 is the NDxxSxxxD/E motif element; the sequence is NDIYSFNKE.

This sequence belongs to the terpene synthase family.

Functionally, terpene synthase that converts its substrate farnesyl diphosphate (FPP) into several yet unidentified sesquiterpenes. This is Terpene synthase 8 from Dictyostelium purpureum (Slime mold).